The chain runs to 232 residues: Ribonuclease 3 (232 aa).

The RNase III domain maps to 7–135 (IQAVESKLKF…ILGAVYLDGG (129 aa)). Glu-48 is a binding site for Mg(2+). The active site involves Asp-52. Mg(2+) is bound by residues Asn-121 and Glu-124. Residue Glu-124 is part of the active site. The region spanning 160–229 (NPKNRLQQFT…AKQALSTHDD (70 aa)) is the DRBM domain.

This sequence belongs to the ribonuclease III family. Homodimer. Requires Mg(2+) as cofactor.

The protein resides in the cytoplasm. The enzyme catalyses Endonucleolytic cleavage to 5'-phosphomonoester.. In terms of biological role, digests double-stranded RNA. Involved in the processing of primary rRNA transcript to yield the immediate precursors to the large and small rRNAs (23S and 16S). Processes some mRNAs, and tRNAs when they are encoded in the rRNA operon. Processes pre-crRNA and tracrRNA of type II CRISPR loci if present in the organism. The sequence is that of Ribonuclease 3 from Chlamydia muridarum (strain MoPn / Nigg).